Here is a 473-residue protein sequence, read N- to C-terminus: Photosystem II CP43 reaction center protein (473 aa).

The propeptide occupies 1-14 (MKTLYSLRRFYHVE). Thr15 is subject to N-acetylthreonine. Thr15 is modified (phosphothreonine). Helical transmembrane passes span 69 to 93 (LFEV…PHLA), 134 to 155 (LLGP…KDRN), 178 to 200 (KALY…RKIT), 255 to 275 (KPFA…LSYS), and 291 to 312 (WFNN…ASQA). Position 367 (Glu367) interacts with [CaMn4O5] cluster. Residues 447–471 (RARAAAAGFEKGIDRDFEPVLSMTP) traverse the membrane as a helical segment.

Belongs to the PsbB/PsbC family. PsbC subfamily. In terms of assembly, PSII is composed of 1 copy each of membrane proteins PsbA, PsbB, PsbC, PsbD, PsbE, PsbF, PsbH, PsbI, PsbJ, PsbK, PsbL, PsbM, PsbT, PsbX, PsbY, PsbZ, Psb30/Ycf12, at least 3 peripheral proteins of the oxygen-evolving complex and a large number of cofactors. It forms dimeric complexes. Binds multiple chlorophylls and provides some of the ligands for the Ca-4Mn-5O cluster of the oxygen-evolving complex. It may also provide a ligand for a Cl- that is required for oxygen evolution. PSII binds additional chlorophylls, carotenoids and specific lipids. serves as cofactor.

The protein resides in the plastid. The protein localises to the chloroplast thylakoid membrane. Functionally, one of the components of the core complex of photosystem II (PSII). It binds chlorophyll and helps catalyze the primary light-induced photochemical processes of PSII. PSII is a light-driven water:plastoquinone oxidoreductase, using light energy to abstract electrons from H(2)O, generating O(2) and a proton gradient subsequently used for ATP formation. This Atropa belladonna (Belladonna) protein is Photosystem II CP43 reaction center protein.